The following is a 238-amino-acid chain: Large ribosomal subunit protein uL1 (238 aa).

It belongs to the universal ribosomal protein uL1 family. In terms of assembly, part of the 50S ribosomal subunit.

In terms of biological role, binds directly to 23S rRNA. The L1 stalk is quite mobile in the ribosome, and is involved in E site tRNA release. Its function is as follows. Protein L1 is also a translational repressor protein, it controls the translation of the L11 operon by binding to its mRNA. The polypeptide is Large ribosomal subunit protein uL1 (Picosynechococcus sp. (strain ATCC 27264 / PCC 7002 / PR-6) (Agmenellum quadruplicatum)).